A 210-amino-acid chain; its full sequence is Homeobox protein Rhox5 (210 aa).

Residues 29 to 117 are disordered; that stretch reads KAEAFLQAGE…KNGKPEDRQM (89 aa). The homeobox; atypical DNA-binding region spans 117–175; sequence MPLQGSRFAQQRLSELQSILQRTNSFDVPREDLYRLMDTCVARVQNWFKIRRAAARRNR.

Its subcellular location is the nucleus. Functionally, transcription factor required for differentiation of embryonic stem cells (ESCs) into primordial germ cells. This is Homeobox protein Rhox5 (Rhox5) from Mus minutoides (Southern African pygmy mouse).